We begin with the raw amino-acid sequence, 359 residues long: NF-kappa-B inhibitor beta (359 aa).

Residues Ser19 and Ser23 each carry the phosphoserine; by RPS6KA1 modification. ANK repeat units lie at residues 57 to 86 (DGDTALHLAVIHQHEPFLDFLLGFSAGTEY), 93 to 122 (LGQTALHLAAILGEASTVEKLYAAGAGVLV), and 126 to 155 (GGHTALHLACRVRAHTCACVLLQPRPSHPR). The interval 153–194 (HPRDASDTYLTQSQDCTPDTSHAPAAVDSQPNPENEEEPRDE) is disordered. Positions 160–172 (TYLTQSQDCTPDT) are enriched in polar residues. ANK repeat units follow at residues 206–235 (DGHTPLHVAVIHKDAEMVRLLRDAGADLNK), 240–269 (CGRTPLHLAVEAQAASVLELLLKAGADPTA), and 273–302 (GGRTPLGSALLRPNPILARLLRAHGAPEPE). The disordered stretch occupies residues 298 to 359 (APEPEDEDDK…KPLPDDPNPA (62 aa)). Ser313 and Ser318 each carry phosphoserine. The segment covering 318–331 (SDSDNRDEGDEYDD) has biased composition (acidic residues). Residues 344-359 (PPSPASKPLPDDPNPA) show a composition bias toward pro residues.

It belongs to the NF-kappa-B inhibitor family. In terms of assembly, interacts with THRB (via ligand-binding domain). Interacts with RELA and REL. Interacts with COMMD1. Interacts with inhibitor kappa B-interacting Ras-like NKIRAS1 and NKIRAS2. Phosphorylated by RPS6KA1; followed by degradation. Interaction with NKIRAS1 and NKIRAS2 probably prevents phosphorylation. In terms of tissue distribution, highly expressed in testis followed by spleen.

Its subcellular location is the cytoplasm. It is found in the nucleus. Functionally, inhibits NF-kappa-B by complexing with and trapping it in the cytoplasm. However, the unphosphorylated form resynthesized after cell stimulation is able to bind NF-kappa-B allowing its transport to the nucleus and protecting it to further NFKBIA-dependent inactivation. Association with inhibitor kappa B-interacting NKIRAS1 and NKIRAS2 prevent its phosphorylation rendering it more resistant to degradation, explaining its slower degradation. In Mus musculus (Mouse), this protein is NF-kappa-B inhibitor beta (Nfkbib).